The primary structure comprises 444 residues: Ribulose bisphosphate carboxylase (444 aa).

Lys-163 serves as the catalytic Proton acceptor. Position 165 (Lys-165) interacts with substrate. Residues Lys-189, Asp-191, and Glu-192 each contribute to the Mg(2+) site. N6-carboxylysine is present on Lys-189. His-281 (proton acceptor) is an active-site residue. Substrate is bound by residues Arg-282, His-314, 367–369 (SGG), and 389–392 (QLGG).

Belongs to the RuBisCO large chain family. Type III subfamily. Homodecamer, consisting of five dimer units which form a ring-like pentagonal structure. This arrangement is essential for its high thermostability. In contrast to form I RuBisCO, the form III RuBisCO is composed solely of large subunits. Mg(2+) is required as a cofactor.

The catalysed reaction is 2 (2R)-3-phosphoglycerate + 2 H(+) = D-ribulose 1,5-bisphosphate + CO2 + H2O. It catalyses the reaction D-ribulose 1,5-bisphosphate + O2 = 2-phosphoglycolate + (2R)-3-phosphoglycerate + 2 H(+). Functionally, catalyzes the addition of molecular CO(2) and H(2)O to ribulose 1,5-bisphosphate (RuBP), generating two molecules of 3-phosphoglycerate (3-PGA). Functions in an archaeal AMP degradation pathway, together with AMP phosphorylase and R15P isomerase. This chain is Ribulose bisphosphate carboxylase, found in Thermococcus kodakarensis (strain ATCC BAA-918 / JCM 12380 / KOD1) (Pyrococcus kodakaraensis (strain KOD1)).